The chain runs to 103 residues: Cell division protein FtsB (103 aa).

The Cytoplasmic portion of the chain corresponds to 1 to 3 (MGK). A helical membrane pass occupies residues 4 to 21 (LTLLLLAILVWLQYSLWF). The Periplasmic portion of the chain corresponds to 22-103 (GKNGIHDYTR…RAQSAGQNNR (82 aa)). Positions 28–71 (DYTRVNDDVAALQATNAKLKARNDQLFAEIDDLNGGQEALEERA) form a coiled coil.

This sequence belongs to the FtsB family. As to quaternary structure, part of a complex composed of FtsB, FtsL and FtsQ.

It is found in the cell inner membrane. Essential cell division protein. May link together the upstream cell division proteins, which are predominantly cytoplasmic, with the downstream cell division proteins, which are predominantly periplasmic. The protein is Cell division protein FtsB of Shigella flexneri serotype 5b (strain 8401).